We begin with the raw amino-acid sequence, 1868 residues long: Proteasome component ECM29 (1868 aa).

At Ser-2 the chain carries N-acetylserine. HEAT repeat units lie at residues 32–69 (TNLQ…RINT), 116–153 (QDRQ…EWVA), 256–292 (PRMI…PYEN), 313–351 (PVKA…HSSE), 384–422 (DFST…LQRQ), 439–476 (VSDL…HLSI), 590–627 (PPFR…QCLI), 707–745 (SVLL…LSDN), 748–780 (AVCA…QTMA), 781–818 (ETYV…THLS), 846–885 (QERK…DLEN), 945–982 (TNVT…YLGH), 988–1025 (SKCN…IGGS), 1030–1067 (SMVK…LFEP), 1137–1174 (QTAK…ESSL), 1178–1215 (LYFN…SQPQ), 1272–1311 (EILD…HSPG), 1361–1398 (VTNS…KSVG), 1422–1459 (PYSG…VSAL), 1503–1540 (NVAS…SGAG), 1544–1581 (LYLP…GIND), and 1649–1687 (KYVK…LLGS). Phosphoserine is present on Ser-1692. HEAT repeat units lie at residues 1746–1785 (RYPM…GISI) and 1830–1867 (GLII…KNIG).

This sequence belongs to the ECM29 family. In terms of assembly, component of the proteasome. ECM29 binds to both proteasome 19S and 20S particles.

Its subcellular location is the cytoplasm. The protein resides in the nucleus. Stabilizes the proteasome holoenzyme, probably by tethering the 20S proteolytic core particle and the 19S regulatory particle. The proteasome is a multicatalytic proteinase complex which is characterized by its ability to cleave peptides with Arg, Phe, Tyr, Leu, and Glu adjacent to the leaving group at neutral or slightly basic pH. The proteasome has an ATP-dependent proteolytic activity. The sequence is that of Proteasome component ECM29 (ECM29) from Saccharomyces cerevisiae (strain ATCC 204508 / S288c) (Baker's yeast).